The sequence spans 78 residues: UPF0291 protein MCCL_0996 (78 aa).

The protein belongs to the UPF0291 family.

It is found in the cytoplasm. The sequence is that of UPF0291 protein MCCL_0996 from Macrococcus caseolyticus (strain JCSC5402) (Macrococcoides caseolyticum).